Consider the following 131-residue polypeptide: Small ribosomal subunit protein bS6 (131 aa).

K93 is subject to N6-acetyllysine. Residues 98–131 (EASPMVKAKDERRERRDDFANETADDAEAGDSEE) form a disordered region. Residues 104-116 (KAKDERRERRDDF) are compositionally biased toward basic and acidic residues. A compositionally biased stretch (acidic residues) spans 120-131 (TADDAEAGDSEE).

The protein belongs to the bacterial ribosomal protein bS6 family.

Its function is as follows. Binds together with bS18 to 16S ribosomal RNA. The polypeptide is Small ribosomal subunit protein bS6 (Escherichia fergusonii (strain ATCC 35469 / DSM 13698 / CCUG 18766 / IAM 14443 / JCM 21226 / LMG 7866 / NBRC 102419 / NCTC 12128 / CDC 0568-73)).